The primary structure comprises 134 residues: ATP synthase epsilon chain, chloroplastic (134 aa).

It belongs to the ATPase epsilon chain family. In terms of assembly, F-type ATPases have 2 components, CF(1) - the catalytic core - and CF(0) - the membrane proton channel. CF(1) has five subunits: alpha(3), beta(3), gamma(1), delta(1), epsilon(1). CF(0) has three main subunits: a, b and c.

The protein resides in the plastid. It localises to the chloroplast thylakoid membrane. Functionally, produces ATP from ADP in the presence of a proton gradient across the membrane. The protein is ATP synthase epsilon chain, chloroplastic of Phalaenopsis aphrodite subsp. formosana (Moth orchid).